The primary structure comprises 197 residues: Elongation factor Ts (197 aa).

The tract at residues 81 to 84 is involved in Mg(2+) ion dislocation from EF-Tu; that stretch reads TDFV.

Belongs to the EF-Ts family.

It is found in the cytoplasm. In terms of biological role, associates with the EF-Tu.GDP complex and induces the exchange of GDP to GTP. It remains bound to the aminoacyl-tRNA.EF-Tu.GTP complex up to the GTP hydrolysis stage on the ribosome. The chain is Elongation factor Ts from Thermotoga neapolitana (strain ATCC 49049 / DSM 4359 / NBRC 107923 / NS-E).